Consider the following 630-residue polypeptide: Low affinity heme transporter str3 (630 aa).

The segment covering 1-26 (MEAKETHSISDHEVELQDAKPEEKSE) has biased composition (basic and acidic residues). The tract at residues 1-51 (MEAKETHSISDHEVELQDAKPEEKSENGNFVFEKAFSSDEEKGSGYNTNET) is disordered. Topologically, residues 1–79 (MEAKETHSIS…VRDSIYQNKR (79 aa)) are cytoplasmic. 2 positions are modified to phosphoserine: Ser-10 and Ser-38. Residues 80–100 (GMYLAYAFGIAILACSWASAI) form a helical membrane-spanning segment. The Extracellular portion of the chain corresponds to 101 to 120 (QSSTTYSYQVYATASFNRTS). Residues 121–141 (MISTLEIATAIISSVCKPILG) traverse the membrane as a helical segment. Residues 142–154 (KFSDITSRPMTYT) lie on the Cytoplasmic side of the membrane. A helical membrane pass occupies residues 155-175 (LVLLFYVIGFIVVASSSTISA). Tyr-176 is a topological domain (extracellular). The helical transmembrane segment at 177–197 (VIGSVFISIGSSGLDYLNTLV) threads the bilayer. The Cytoplasmic segment spans residues 198-208 (VGDLTSLKWRG). A helical membrane pass occupies residues 209-229 (FMTALLSTPYIATVWFTGFIV). The Extracellular portion of the chain corresponds to 230–241 (QGIIDSNWRWGY). A helical transmembrane segment spans residues 242–262 (GMFAIIMPAVMTPAVIILMYL). The Cytoplasmic portion of the chain corresponds to 263–302 (ERQANKDENIKKIINYQTEEKNKNKQSKWQKLWKAVLEVD). The helical transmembrane segment at 303–323 (LFGLILLGVGWSILLLPFSLT) threads the bilayer. Residues 324–335 (SYAKNGWKNPSM) are Extracellular-facing. The helical transmembrane segment at 336 to 356 (IAMMVVGGVILIAYSGYEMFI) threads the bilayer. The Cytoplasmic portion of the chain corresponds to 357-370 (APYPSCPRRVMNRT). A helical transmembrane segment spans residues 371–391 (FITAVIIDFFYYLAGYLQSMY). At 392–406 (FTTYTWILYDWSYRD) the chain is on the extracellular side. A helical membrane pass occupies residues 407–427 (WTYFNNTMTIALCVFGVFAGA). Over 428–439 (MHRVFHRYKYLQ) the chain is Cytoplasmic. A helical membrane pass occupies residues 440–460 (IIGLVIKIVGYGILIRPNFAA). Over 461-465 (TGKVD) the chain is Extracellular. A helical membrane pass occupies residues 466–486 (LAWSLILIGMGGSFSVVGSQV). At 487-502 (SCQASVPHQDLAIASS) the chain is on the cytoplasmic side. A helical membrane pass occupies residues 503 to 523 (LLPLYTNIGGAIGAAIASPIF). Residues 522–576 (IFSNKVPKYLREYLPSSINDTQVYNFYSDSSLIREYPVGTEIRDGAIKAYSRSMF) are heme binding. Over 524–574 (SNKVPKYLREYLPSSINDTQVYNFYSDSSLIREYPVGTEIRDGAIKAYSRS) the chain is Extracellular. The chain crosses the membrane as a helical span at residues 575 to 595 (MFFLLVPAVSLSFIPLAAAFW). At 596–630 (QSNFYLGNQQNAVEGDQDHKKKGDKETTQEEKIII) the chain is on the cytoplasmic side. The disordered stretch occupies residues 610–630 (GDQDHKKKGDKETTQEEKIII). The segment covering 611 to 630 (DQDHKKKGDKETTQEEKIII) has biased composition (basic and acidic residues).

The protein belongs to the major facilitator superfamily.

The protein localises to the cell membrane. In terms of biological role, low affinity heme transporter involved in the assimilation of exogenous heme during conditions of low cellular iron. This Schizosaccharomyces pombe (strain 972 / ATCC 24843) (Fission yeast) protein is Low affinity heme transporter str3.